Reading from the N-terminus, the 476-residue chain is Aspartyl/glutamyl-tRNA(Asn/Gln) amidotransferase subunit B (476 aa).

Belongs to the GatB/GatE family. GatB subfamily. In terms of assembly, heterotrimer of A, B and C subunits.

The enzyme catalyses L-glutamyl-tRNA(Gln) + L-glutamine + ATP + H2O = L-glutaminyl-tRNA(Gln) + L-glutamate + ADP + phosphate + H(+). It catalyses the reaction L-aspartyl-tRNA(Asn) + L-glutamine + ATP + H2O = L-asparaginyl-tRNA(Asn) + L-glutamate + ADP + phosphate + 2 H(+). Allows the formation of correctly charged Asn-tRNA(Asn) or Gln-tRNA(Gln) through the transamidation of misacylated Asp-tRNA(Asn) or Glu-tRNA(Gln) in organisms which lack either or both of asparaginyl-tRNA or glutaminyl-tRNA synthetases. The reaction takes place in the presence of glutamine and ATP through an activated phospho-Asp-tRNA(Asn) or phospho-Glu-tRNA(Gln). The protein is Aspartyl/glutamyl-tRNA(Asn/Gln) amidotransferase subunit B of Lacticaseibacillus paracasei (strain ATCC 334 / BCRC 17002 / CCUG 31169 / CIP 107868 / KCTC 3260 / NRRL B-441) (Lactobacillus paracasei).